The primary structure comprises 128 residues: MRDWRFFEDGNLSCSRFELVILASQRAYDLQSGSLPDVQHEESDKSPVIALKELYSLSMDYEKLFHAAIRRIVHFSGSGYAGISSDSGAARPHARGLVEHIDHDLVEERDSEVFSDSEFSFAEDEGDE.

Belongs to the RNA polymerase subunit omega family. The RNAP catalytic core consists of 2 alpha, 1 beta, 1 beta' and 1 omega subunit. When a sigma factor is associated with the core the holoenzyme is formed, which can initiate transcription.

The catalysed reaction is RNA(n) + a ribonucleoside 5'-triphosphate = RNA(n+1) + diphosphate. Functionally, promotes RNA polymerase assembly. Latches the N- and C-terminal regions of the beta' subunit thereby facilitating its interaction with the beta and alpha subunits. This chain is DNA-directed RNA polymerase subunit omega, found in Neorickettsia sennetsu (strain ATCC VR-367 / Miyayama) (Ehrlichia sennetsu).